Here is a 186-residue protein sequence, read N- to C-terminus: MIRGLFVGRFQPVHKGHIKALEFVFSQVDEVIIGIGSAQASHTLKNPFTTGERMEMLIRALEEAGFDKRYYLIPLPDINFNAIWVPYVESMVPRFHVVFTGNSLVAQLFKERGYKVVVQPMFKKDILSATEIRRRMIAGEPWEDLVPKSVVEYIKEIKGVERLRNLATNLESSEKELQAPIRVPEY.

It belongs to the archaeal NMN adenylyltransferase family.

It localises to the cytoplasm. It carries out the reaction beta-nicotinamide D-ribonucleotide + ATP + H(+) = diphosphate + NAD(+). It functions in the pathway cofactor biosynthesis; NAD(+) biosynthesis; NAD(+) from nicotinamide D-ribonucleotide: step 1/1. The protein is Nicotinamide-nucleotide adenylyltransferase of Pyrococcus horikoshii (strain ATCC 700860 / DSM 12428 / JCM 9974 / NBRC 100139 / OT-3).